The primary structure comprises 233 residues: MIEHLGINTPYFGILVSLIPFVIATYFYKKTNGFFLLAPLFVSMVAGIAFLKLTGISYENYKIGGDIINFFLEPATICFAIPLYRKREVLKKYWLQIFGGIAVGTIIALLLIYLVAITFQFGNQIIASMLPQAATTAIALPVSDGIGGVKELTSLAVILNAVVISALGAKIVKLFKISNPIARGLALGTSGHTLGVAAAKELGETEESMGSIAVVIVGVIVVAVVPILAPILL.

The next 6 helical transmembrane spans lie at 5–25 (LGIN…VIAT), 33–53 (GFFL…FLKL), 63–83 (IGGD…AIPL), 97–117 (IFGG…LVAI), 152–172 (LTSL…AKIV), and 212–232 (IAVV…APIL).

The protein belongs to the CidB/LrgB family. LrgB subfamily.

The protein resides in the cell membrane. Inhibits the expression or activity of extracellular murein hydrolases by interacting, possibly with LrgA, with the holin-like proteins CidA and/or CidB. The LrgAB and CidAB proteins may affect the proton motive force of the membrane. May be involved in programmed cell death (PCD), possibly triggering PCD in response to antibiotics and environmental stresses. The sequence is that of Antiholin-like protein LrgB from Staphylococcus epidermidis (strain ATCC 35984 / DSM 28319 / BCRC 17069 / CCUG 31568 / BM 3577 / RP62A).